A 1349-amino-acid chain; its full sequence is Indole-3-acetaldehyde oxidase (1349 aa).

Residues alanine 7–isoleucine 94 form the 2Fe-2S ferredoxin-type domain. [2Fe-2S] cluster is bound by residues cysteine 46, cysteine 51, and cysteine 54. One can recognise an FAD-binding PCMH-type domain in the interval valine 237–serine 415.

Belongs to the xanthine dehydrogenase family. In terms of assembly, aldehyde oxidases (AO) are homodimers and heterodimers of AO subunits. [2Fe-2S] cluster serves as cofactor. Requires FAD as cofactor. It depends on Mo-molybdopterin as a cofactor. As to expression, mostly expressed in coleoptiles, and, to a lower extent, in mesocotyl and roots.

Its subcellular location is the cytoplasm. The enzyme catalyses indole-3-acetaldehyde + O2 + H2O = (indol-3-yl)acetate + H2O2 + H(+). Its function is as follows. In higher plants aldehyde oxidases (AO) appear to be homo- and heterodimeric assemblies of AO subunits with probably different physiological functions. Involved in the biosynthesis of auxin. The sequence is that of Indole-3-acetaldehyde oxidase (AO2) from Zea mays (Maize).